The sequence spans 348 residues: Tripartite motif-containing protein 16-like protein (348 aa).

Residues 139 to 337 enclose the B30.2/SPRY domain; that stretch reads YWTSKPEPST…RIVDLGEEPE (199 aa).

This sequence belongs to the TRIM/RBCC family.

The protein resides in the cytoplasm. This is Tripartite motif-containing protein 16-like protein (TRIM16L) from Homo sapiens (Human).